The chain runs to 861 residues: 1,4-alpha-glucan-branching enzyme (861 aa).

2 residues coordinate (1,4-alpha-D-glucosyl)n: Trp173 and Lys208. The Nucleophile role is filled by Asp429. Residue Glu484 is the Proton donor of the active site.

The protein belongs to the glycosyl hydrolase 13 family. GlgB subfamily. In terms of assembly, monomer.

The protein resides in the plastid. Its subcellular location is the chloroplast. The protein localises to the amyloplast. It carries out the reaction Transfers a segment of a (1-&gt;4)-alpha-D-glucan chain to a primary hydroxy group in a similar glucan chain.. It functions in the pathway glycan biosynthesis; starch biosynthesis. Its function is as follows. Catalyzes the formation of the alpha-1,6-glucosidic linkages in starch by scission of a 1,4-alpha-linked oligosaccharide from growing alpha-1,4-glucan chains and the subsequent attachment of the oligosaccharide to the alpha-1,6 position. The chain is 1,4-alpha-glucan-branching enzyme (SBE1) from Solanum tuberosum (Potato).